A 213-amino-acid chain; its full sequence is Redox-sensing transcriptional repressor Rex (213 aa).

A DNA-binding region (H-T-H motif) is located at residues 18-57 (LYYRIFKRFHAEKIERANSKQIAEAIGIDSATVRRDFSYF). 92 to 97 (GIGNMG) contributes to the NAD(+) binding site.

This sequence belongs to the transcriptional regulatory Rex family. Homodimer.

It is found in the cytoplasm. Modulates transcription in response to changes in cellular NADH/NAD(+) redox state. Binds to the promoter of the aldehyde-alcohol dehydrogenase adhE gene. Functions as a redox-dependent repressor of adhE expression. The polypeptide is Redox-sensing transcriptional repressor Rex (Streptococcus pneumoniae (strain ATCC BAA-255 / R6)).